We begin with the raw amino-acid sequence, 115 residues long: NADH-ubiquinone oxidoreductase chain 3 (115 aa).

Transmembrane regions (helical) follow at residues 4 to 24 (LMVL…AFWL), 55 to 75 (FFLV…LLPL), and 84 to 104 (INIM…GLAY).

This sequence belongs to the complex I subunit 3 family. As to quaternary structure, core subunit of respiratory chain NADH dehydrogenase (Complex I) which is composed of 45 different subunits. Interacts with TMEM186. Interacts with TMEM242.

Its subcellular location is the mitochondrion membrane. The catalysed reaction is a ubiquinone + NADH + 5 H(+)(in) = a ubiquinol + NAD(+) + 4 H(+)(out). In terms of biological role, core subunit of the mitochondrial membrane respiratory chain NADH dehydrogenase (Complex I) that is believed to belong to the minimal assembly required for catalysis. Complex I functions in the transfer of electrons from NADH to the respiratory chain. The immediate electron acceptor for the enzyme is believed to be ubiquinone. This is NADH-ubiquinone oxidoreductase chain 3 from Onychomys leucogaster (Northern grasshopper mouse).